Consider the following 22-residue polypeptide: Dioicin-1 (22 aa).

The protein resides in the secreted. It is found in the extracellular space. The protein localises to the golgi apparatus. Its subcellular location is the vacuole. It carries out the reaction Endohydrolysis of the N-glycosidic bond at one specific adenosine on the 28S rRNA.. Functionally, nicks pBR322 dsDNA. Has adenine polynucleotide glycosidase activity on herring sperm ssDNA. This Phytolacca dioica (Bella sombra tree) protein is Dioicin-1.